A 490-amino-acid chain; its full sequence is Glutamate--tRNA ligase (490 aa).

Residues 10–20 (PSPTGRMHVGN) carry the 'HIGH' region motif. Zn(2+) contacts are provided by C109, C111, C140, and H142. A 'KMSKS' region motif is present at residues 257–261 (KLSKR). K260 contacts ATP.

Belongs to the class-I aminoacyl-tRNA synthetase family. Glutamate--tRNA ligase type 1 subfamily. Monomer. The cofactor is Zn(2+).

The protein resides in the cytoplasm. It catalyses the reaction tRNA(Glu) + L-glutamate + ATP = L-glutamyl-tRNA(Glu) + AMP + diphosphate. Its function is as follows. Catalyzes the attachment of glutamate to tRNA(Glu) in a two-step reaction: glutamate is first activated by ATP to form Glu-AMP and then transferred to the acceptor end of tRNA(Glu). This is Glutamate--tRNA ligase from Lachnoclostridium phytofermentans (strain ATCC 700394 / DSM 18823 / ISDg) (Clostridium phytofermentans).